A 488-amino-acid chain; its full sequence is Bifunctional protein NifU/MnmA (488 aa).

The tract at residues 1–130 is nifU-like protein; that stretch reads MPERYGPRVI…DYWSRQGDAL (130 aa). The tRNA-specific 2-thiouridylase MnmA stretch occupies residues 143–488; that stretch reads RRGVVAAMSG…GGGIIARRDA (346 aa). ATP contacts are provided by residues 149-156 and Phe175; that span reads AMSGGVDS. Catalysis depends on Cys240, which acts as the Nucleophile. A disulfide bond links Cys240 and Cys333. ATP is bound at residue Gly264. The segment at 283-285 is interaction with tRNA; that stretch reads KDQ. The Cysteine persulfide intermediate role is filled by Cys333. The tract at residues 433-434 is interaction with tRNA; it reads RY.

It in the N-terminal section; belongs to the NifU family. This sequence in the C-terminal section; belongs to the MnmA/TRMU family.

Its subcellular location is the cytoplasm. The catalysed reaction is S-sulfanyl-L-cysteinyl-[protein] + uridine(34) in tRNA + AH2 + ATP = 2-thiouridine(34) in tRNA + L-cysteinyl-[protein] + A + AMP + diphosphate + H(+). Functionally, may be involved in the formation or repair of [Fe-S] clusters present in iron-sulfur proteins. Catalyzes the 2-thiolation of uridine at the wobble position (U34) of tRNA, leading to the formation of s(2)U34. This is Bifunctional protein NifU/MnmA (nifU/mnmA) from Rubrobacter xylanophilus (strain DSM 9941 / JCM 11954 / NBRC 16129 / PRD-1).